The sequence spans 523 residues: MAGHTQQPSGRGNPRPAPSPSPVPGTVPGASERVALKKEIGLLSACTIIIGNIIGSGIFISPKGVLEHSGSVGLALFVWVLGGGVTALGSLCYAELGVAIPKSGGDYAYVTEIFGGLAGFLLLWSAVLIMYPTSLAVISMTFSNYVLQPVFPNCIPPTTASRVLSMACLMLLTWVNSSSVRWATRIQDMFTGGKLLALSLIIGVGLLQIFQGHFEELRPSNAFAFWMTPSVGHLALAFLQGSFAFSGWNFLNYVTEEMVDARKNLPRAIFISIPLVTFVYTFTNIAYFTAMSPQELLSSNAVAVTFGEKLLGYFSWVMPVSVALSTFGGINGYLFTYSRLCFSGAREGHLPSLLAMIHVRHCTPIPALLVCCGATAVIMLVGDTYTLINYVSFINYLCYGVTILGLLLLRWRRPALHRPIKVNLLIPVAYLVFWAFLLVFSFISEPMVCGVGVIIILTGVPIFFLGVFWRSKPKCVHRLTESMTHWGQELCFVVYPQDAPEEEENGPCPPSLLPATDKPSKPQ.

The interval 1–28 is disordered; the sequence is MAGHTQQPSGRGNPRPAPSPSPVPGTVP. The segment covering 15-25 has biased composition (pro residues); sequence RPAPSPSPVPG. 9 helical membrane passes run 40–60, 72–92, 113–133, 268–288, 310–330, 362–382, 388–408, 424–444, and 448–468; these read IGLLSACTIIIGNIIGSGIFI, VGLALFVWVLGGGVTALGSLC, IFGGLAGFLLLWSAVLIMYPT, AIFISIPLVTFVYTFTNIAYF, LLGYFSWVMPVSVALSTFGGI, CTPIPALLVCCGATAVIMLVG, INYVSFINYLCYGVTILGLLL, LLIPVAYLVFWAFLLVFSFIS, and VCGVGVIIILTGVPIFFLGVF. The tract at residues 499–523 is disordered; it reads APEEEENGPCPPSLLPATDKPSKPQ.

This sequence belongs to the amino acid-polyamine-organocation (APC) superfamily. In terms of assembly, disulfide-linked heterodimer with the amino acid transport protein SLC3A2/4F2hc. Expressed in brain, heart, kidney, liver, lung, pancreas, placenta, and skeletal muscle.

The protein localises to the cell membrane. It catalyses the reaction L-alanine(in) + glycine(out) = L-alanine(out) + glycine(in). It carries out the reaction L-serine(out) + L-alanine(in) = L-serine(in) + L-alanine(out). The catalysed reaction is L-threonine(out) + L-alanine(in) = L-threonine(in) + L-alanine(out). The enzyme catalyses L-cysteine(out) + L-alanine(in) = L-cysteine(in) + L-alanine(out). It catalyses the reaction 2-aminoisobutanoate(out) + L-alanine(in) = 2-aminoisobutanoate(in) + L-alanine(out). It carries out the reaction D-serine(out) + L-alanine(in) = D-serine(in) + L-alanine(out). The catalysed reaction is D-alanine(out) + L-alanine(in) = D-alanine(in) + L-alanine(out). The enzyme catalyses L-valine(out) + L-alanine(in) = L-valine(in) + L-alanine(out). It catalyses the reaction L-methionine(out) + L-alanine(in) = L-methionine(in) + L-alanine(out). It carries out the reaction beta-alanine(out) + L-alanine(in) = beta-alanine(in) + L-alanine(out). The catalysed reaction is D-cysteine(out) + L-alanine(in) = D-cysteine(in) + L-alanine(out). The enzyme catalyses D-threonine(out) + L-alanine(in) = D-threonine(in) + L-alanine(out). It catalyses the reaction D-isoleucine(out) + D-serine(in) = D-isoleucine(in) + D-serine(out). It carries out the reaction D-serine(in) = D-serine(out). Functionally, associates with SLC3A2/4F2hc to form a functional heterodimeric complex that translocates small neutral L- and D-amino acids across the plasma membrane. Preferentially mediates exchange transport, but can also operate via facilitated diffusion. Acts as a major transporter for glycine, L- and D-serine in the central nervous system. At the spinal cord and brainstem regulates glycine metabolism and glycinergic inhibitory neurotransmission by providing for glycine de novo synthesis from L-serine and glycine recycling from astrocytes to glycinergic motor neurons. At Schaffer collateral-CA1 synapses mediates D-serine and glycine release that modulates post-synaptic activation of NMDA receptors and excitatory glutamatergic transmission. May regulate D-serine release from mesenchymal progenitors located in developing subcutaneous adipose tissue, favoring white adipocyte over thermogenic beige adipocyte lineage commitment. This Homo sapiens (Human) protein is Asc-type amino acid transporter 1 (SLC7A10).